We begin with the raw amino-acid sequence, 228 residues long: 2,3-bisphosphoglycerate-dependent phosphoglycerate mutase (228 aa).

Substrate-binding positions include 8–15 (RHGQSEWN), 21–22 (TG), Arg60, 87–90 (ERHY), Lys98, 114–115 (RR), and 183–184 (GN). His9 acts as the Tele-phosphohistidine intermediate in catalysis. The active-site Proton donor/acceptor is the Glu87.

The protein belongs to the phosphoglycerate mutase family. BPG-dependent PGAM subfamily.

It carries out the reaction (2R)-2-phosphoglycerate = (2R)-3-phosphoglycerate. Its pathway is carbohydrate degradation; glycolysis; pyruvate from D-glyceraldehyde 3-phosphate: step 3/5. Its function is as follows. Catalyzes the interconversion of 2-phosphoglycerate and 3-phosphoglycerate. In Staphylococcus aureus (strain MRSA252), this protein is 2,3-bisphosphoglycerate-dependent phosphoglycerate mutase.